The primary structure comprises 163 residues: MAITGSAAPSWPRLLHAEGPPSVICIRLLVGLVFLSEGIQKFMYPDQLGPGRFERIGIPAATFFADLDGVVEIVCGTLVLLGLLTRVAAVPLLIDMVGAIVLTKLRALQPGGFLGVEGFWGMAHAARTDLSMLLGLIFLLWSGPGRWSLDRRLSKRATACGAR.

4 consecutive transmembrane segments (helical) span residues 19-39, 63-83, 87-107, and 119-139; these read GPPSVICIRLLVGLVFLSEGI, FFADLDGVVEIVCGTLVLLGL, VAAVPLLIDMVGAIVLTKLRA, and FWGMAHAARTDLSMLLGLIFL.

The protein belongs to the DoxX family.

It localises to the cell membrane. This is an uncharacterized protein from Mycobacterium tuberculosis (strain ATCC 25618 / H37Rv).